The primary structure comprises 509 residues: Zinc finger protein CKR1 (509 aa).

A KRAB domain is found at Met1–Pro61. Basic and acidic residues-rich tracts occupy residues Glu41–Ala50 and Pro98–Pro112. The tract at residues Glu41–Gly114 is disordered. 11 consecutive C2H2-type zinc fingers follow at residues Phe113–His135, Tyr141–His163, His169–His191, His197–His219, Tyr225–His247, Gln279–His303, His303–His325, Phe331–His353, Tyr359–Ala383, Phe387–His409, and Tyr415–His437. Residues Ser428–Glu479 are disordered.

It belongs to the krueppel C2H2-type zinc-finger protein family.

It is found in the nucleus. In Gallus gallus (Chicken), this protein is Zinc finger protein CKR1.